A 135-amino-acid chain; its full sequence is MATRLLCYTVLCLLGARILNSKVIQTPRYLVKGQGQKAKMRCIPEKGHPVVFWYQQNKNNEFKFLINFQNQEVLQQIDMTEKRFSAECPSNSPCSLEIQSSEAGDSALYLCASSLFGTSDYTFGSGTRLLVIGKA.

Positions 1–20 (MATRLLCYTVLCLLGARILN) are cleaved as a signal peptide. The segment at 21 to 115 (SKVIQTPRYL…SALYLCASSL (95 aa)) is v segment. Cys-42 and Cys-111 are disulfide-bonded. The interval 116 to 118 (FGT) is d segment. The j segment stretch occupies residues 119 to 135 (SDYTFGSGTRLLVIGKA).

The chain is T-cell receptor beta chain V region 3H.25 from Mus musculus (Mouse).